Reading from the N-terminus, the 430-residue chain is Sorting nexin-30 (430 aa).

Positions 1–18 (MSNGGTPRSLPSSGQKSI) are enriched in polar residues. The tract at residues 1–66 (MSNGGTPRSL…SSPASSSSLL (66 aa)) is disordered. The span at 57–66 (SSPASSSSLL) shows a compositional bias: low complexity. The PX domain maps to 80 to 201 (RDLFVTVDDP…AFLSAKDLNK (122 aa)). A 1,2-diacyl-sn-glycero-3-phospho-(1D-myo-inositol-3-phosphate) is bound by residues R123, Q125, K153, and R167. Residues 223-428 (KLRGRPVEFA…LQDKQDAKGE (206 aa)) form the BAR domain.

Belongs to the sorting nexin family.

The protein localises to the early endosome membrane. In terms of biological role, involved in the regulation of endocytosis and in several stages of intracellular trafficking. Together with snx4, involved in autophagosome assembly. The chain is Sorting nexin-30 (snx30) from Danio rerio (Zebrafish).